Reading from the N-terminus, the 191-residue chain is MGAYDGAEAPRAAPASTAANSRPSRLLLLHSLLLRLVAVVVSILVIAVMVHAKQRVMIFKAEWDNSKAFVALVAISAICLGYSFLQFILSAFHLCSKSWKSPTKCWAWMNFIADQILTYAMLGAAAAAAELAYIAKNGSSRAQWQPICSTFNTFCTRAGASIILSFIAVLALANSSAISAYHLFRRPSSSV.

At 1–25 (MGAYDGAEAPRAAPASTAANSRPSR) the chain is on the cytoplasmic side. Residues 26–46 (LLLLHSLLLRLVAVVVSILVI) form a helical membrane-spanning segment. Topologically, residues 47-68 (AVMVHAKQRVMIFKAEWDNSKA) are extracellular. Residues 69 to 89 (FVALVAISAICLGYSFLQFIL) traverse the membrane as a helical segment. Over 90–114 (SAFHLCSKSWKSPTKCWAWMNFIAD) the chain is Cytoplasmic. Residues 115–135 (QILTYAMLGAAAAAAELAYIA) traverse the membrane as a helical segment. The Extracellular portion of the chain corresponds to 136 to 157 (KNGSSRAQWQPICSTFNTFCTR). The N-linked (GlcNAc...) asparagine glycan is linked to Asn137. The helical transmembrane segment at 158–178 (AGASIILSFIAVLALANSSAI) threads the bilayer. Over 179-191 (SAYHLFRRPSSSV) the chain is Cytoplasmic.

It belongs to the Casparian strip membrane proteins (CASP) family. Homodimer and heterodimers.

It is found in the cell membrane. The sequence is that of CASP-like protein 2U3 from Selaginella moellendorffii (Spikemoss).